The following is a 209-amino-acid chain: Small ribosomal subunit protein uS4 (209 aa).

The S4 RNA-binding domain occupies 99 to 179 (GRLDSVAYRM…FPEWIEVDAK (81 aa)).

The protein belongs to the universal ribosomal protein uS4 family. As to quaternary structure, part of the 30S ribosomal subunit. Contacts protein S5. The interaction surface between S4 and S5 is involved in control of translational fidelity.

Functionally, one of the primary rRNA binding proteins, it binds directly to 16S rRNA where it nucleates assembly of the body of the 30S subunit. Its function is as follows. With S5 and S12 plays an important role in translational accuracy. The sequence is that of Small ribosomal subunit protein uS4 from Azoarcus sp. (strain BH72).